The primary structure comprises 102 residues: Small ribosomal subunit protein uS10 (102 aa).

The protein belongs to the universal ribosomal protein uS10 family. As to quaternary structure, part of the 30S ribosomal subunit.

Involved in the binding of tRNA to the ribosomes. The polypeptide is Small ribosomal subunit protein uS10 (Heliobacterium modesticaldum (strain ATCC 51547 / Ice1)).